Reading from the N-terminus, the 105-residue chain is Flowering-promoting factor 1-like protein 5 (105 aa).

Belongs to the FPF1 family.

The protein is Flowering-promoting factor 1-like protein 5 of Oryza sativa subsp. japonica (Rice).